The chain runs to 334 residues: Sucrose operon repressor (334 aa).

Residues 6-63 (VTIKDIAELAGVSKATASLVLNGRGKELRVAQETRERVLAIAREQHYQPSIHARSLRD) enclose the HTH lacI-type domain. A DNA-binding region (H-T-H motif) is located at residues 8 to 27 (IKDIAELAGVSKATASLVLN).

Functionally, repressor for the scr operon. Binds D-fructose as an inducer. The polypeptide is Sucrose operon repressor (scrR) (Klebsiella pneumoniae).